A 355-amino-acid chain; its full sequence is uncharacterized protein (355 aa).

This is an uncharacterized protein from Aquifex aeolicus (strain VF5).